The primary structure comprises 268 residues: Orotidine 5'-phosphate decarboxylase (268 aa).

Substrate is bound by residues Asp-38, 60 to 62 (KTH), 92 to 101 (DRKFADIGNT), Tyr-218, and Arg-236. Catalysis depends on Lys-94, which acts as the Proton donor.

The protein belongs to the OMP decarboxylase family.

The enzyme catalyses orotidine 5'-phosphate + H(+) = UMP + CO2. It participates in pyrimidine metabolism; UMP biosynthesis via de novo pathway; UMP from orotate: step 2/2. In Candida parapsilosis (Yeast), this protein is Orotidine 5'-phosphate decarboxylase (URA3).